The chain runs to 122 residues: Small ribosomal subunit protein uS13 (122 aa).

The span at G95–T116 shows a compositional bias: basic residues. A disordered region spans residues G95–K122.

Belongs to the universal ribosomal protein uS13 family. As to quaternary structure, part of the 30S ribosomal subunit. Forms a loose heterodimer with protein S19. Forms two bridges to the 50S subunit in the 70S ribosome.

Located at the top of the head of the 30S subunit, it contacts several helices of the 16S rRNA. In the 70S ribosome it contacts the 23S rRNA (bridge B1a) and protein L5 of the 50S subunit (bridge B1b), connecting the 2 subunits; these bridges are implicated in subunit movement. Contacts the tRNAs in the A and P-sites. The protein is Small ribosomal subunit protein uS13 of Campylobacter curvus (strain 525.92).